The following is a 3291-amino-acid chain: Protocadherin-16 (3291 aa).

Positions Met1–Arg35 are cleaved as a signal peptide. Over Gly36–Ala2933 the chain is Extracellular. Cadherin domains lie at Gln37 to Phe137, Pro138 to Phe249, Asn250 to Met356, Val369 to Phe466, Leu476 to Phe572, Gln573 to Phe679, Tyr680 to Phe784, Glu785 to Phe888, Pro889 to Phe994, Asp995 to Phe1105, Ser1100 to Phe1205, Ile1218 to Leu1317, Val1326 to Phe1429, Ala1430 to Phe1539, Phe1539 to Phe1642, Pro1643 to Phe1744, Gly1745 to Phe1848, Pro1849 to Phe1953, Leu1976 to Phe2061, Pro2062 to Phe2164, Leu2165 to Ile2270, Ile2270 to Phe2369, Ser2370 to Phe2475, Thr2476 to Phe2595, Thr2596 to Phe2699, Pro2700 to Phe2806, and Leu2807 to Leu2926. N-linked (GlcNAc...) asparagine glycosylation is present at Asn396. Residues Gly951 to Pro971 are disordered. Asn1711 carries N-linked (GlcNAc...) asparagine glycosylation. An N-linked (GlcNAc...) asparagine glycan is attached at Asn2354. Asn2562 carries an N-linked (GlcNAc...) asparagine glycan. A helical membrane pass occupies residues Val2934 to Val2954. Residues Arg2955–Ile3291 lie on the Cytoplasmic side of the membrane. A disordered region spans residues Ser2978–Glu3033. Residues Gly3004–Pro3013 show a composition bias toward gly residues. Residue Ser3048 is modified to Phosphoserine. Disordered regions lie at residues Ser3051–Asp3080 and Ala3226–Ile3291. A compositionally biased stretch (low complexity) spans Ser3237–Pro3259. Residues Pro3270 to Ser3279 show a composition bias toward polar residues.

As to quaternary structure, heterophilic interaction with FAT4; this interaction affects their respective protein levels.

The protein localises to the cell membrane. Calcium-dependent cell-adhesion protein. Mediates functions in neuroprogenitor cell proliferation and differentiation. The polypeptide is Protocadherin-16 (Dchs1) (Rattus norvegicus (Rat)).